A 315-amino-acid polypeptide reads, in one-letter code: tRNA pseudouridine synthase B (315 aa).

Residue Asp54 is the Nucleophile of the active site.

This sequence belongs to the pseudouridine synthase TruB family. Type 1 subfamily.

The enzyme catalyses uridine(55) in tRNA = pseudouridine(55) in tRNA. Its function is as follows. Responsible for synthesis of pseudouridine from uracil-55 in the psi GC loop of transfer RNAs. The chain is tRNA pseudouridine synthase B from Cupriavidus pinatubonensis (strain JMP 134 / LMG 1197) (Cupriavidus necator (strain JMP 134)).